Here is a 784-residue protein sequence, read N- to C-terminus: MLGRKKNPETVQTESKSVESKTHDPLRRLGVLDDEDVLLMLQGSKMMKVRSQRWRKDRRLKLLEDCVTVWCESSKTSRKSNRQQTFSVTEVECVREGCQSECLRRMTDLVPEKNCFTVVFRGGRKSLDLCCHTQEEAERWVRGIRTLKDRVSNMSQKEKLDHWIRGYLRRADQNQDGKMSYDEVKHLLQLINIDLNEQYARTLFKKCDRSCDGRLDHVEIEEFCREMMRRPELDAVFRHYSGNGCVLTTLELRDFLGDQGEDASLVHAKSLIQTFELNDWAQKNLFMTQNGFTMYMLSKENDVFNPDHTHVYQDMSKPLAHYYISSSHNTYLTKDQVTSASSTEPYIRALNQGCRCVELDCWDGDKGEPIIYHGHTLTSKVLFKEVIETIAQYAFKASPYPLILSLENHCSVEQQAIMAQQLQSILGKKLLAKPLSDLPLKQLPSPEELKGRILLKGKKLNGLLGKTESWTSFTNSSDEESVAGGNKKESKKDLARSASTKLSPELSDLVVYCQSVPFSGFETANQRPPSVITSFSENEALKLIKDSGKLFVRNNSRQLSRIYPSAQRLQSSNFDPQDMWNAGCQMVALNFQTPGEQMDLNQGRFLPNGRCGYVLKPEFLCDPKSDFDPENTGGGPGHIPTQLTIRVISAQQLPKINTDKPNSIVDPQVWVEIHGVSIDKARAKTQRIDNNGFNPRWDCTVSFQLQLPELALVRFMVEDHDHKSKNDFIGQFTLPFTSLRTGYRHVHLLKADGSTLSPATLFIHVKVVRRGVHIKTVSERIGKA.

Positions 1-25 (MLGRKKNPETVQTESKSVESKTHDP) are disordered. Basic and acidic residues predominate over residues 16–25 (KSVESKTHDP). Positions 38–149 (LLMLQGSKMM…WVRGIRTLKD (112 aa)) constitute a PH domain. The tract at residues 48 to 78 (KVRSQRWRKDRRLKLLEDCVTVWCESSKTSR) is substrate binding. EF-hand domains lie at 159-194 (KLDHWIRGYLRRADQNQDGKMSYDEVKHLLQLINID), 195-230 (LNEQYARTLFKKCDRSCDGRLDHVEIEEFCREMMRR), and 227-262 (MMRRPELDAVFRHYSGNGCVLTTLELRDFLGDQGED). The Ca(2+) site is built by aspartate 172, asparagine 174, aspartate 176, lysine 178, glutamate 183, aspartate 208, serine 210, aspartate 212, arginine 214, and glutamate 219. The 146-residue stretch at 313 to 458 (QDMSKPLAHY…LKGRILLKGK (146 aa)) folds into the PI-PLC X-box domain. Residue histidine 328 is part of the active site. Residues asparagine 329, glutamate 358, and aspartate 360 each coordinate Ca(2+). Histidine 373 is a catalytic residue. Glutamate 407 contacts Ca(2+). Residues lysine 456 and lysine 458 each contribute to the substrate site. Residues 473–498 (FTNSSDEESVAGGNKKESKKDLARSA) are disordered. Positions 486–495 (NKKESKKDLA) are enriched in basic and acidic residues. The PI-PLC Y-box domain occupies 506–621 (LSDLVVYCQS…GYVLKPEFLC (116 aa)). Substrate is bound by residues serine 534 and arginine 561. Positions 621–750 (CDPKSDFDPE…TGYRHVHLLK (130 aa)) constitute a C2 domain. Positions 664, 666, 690, 719, and 721 each coordinate Ca(2+).

Requires Ca(2+) as cofactor.

The protein localises to the membrane. The protein resides in the cytoplasm. It localises to the cleavage furrow. It carries out the reaction a 1,2-diacyl-sn-glycero-3-phospho-(1D-myo-inositol-4,5-bisphosphate) + H2O = 1D-myo-inositol 1,4,5-trisphosphate + a 1,2-diacyl-sn-glycerol + H(+). In terms of biological role, hydrolyzes the phosphatidylinositol 4,5-bisphosphate (PIP2) to generate 2 second messenger molecules diacylglycerol (DAG) and inositol 1,4,5-trisphosphate (IP3). DAG mediates the activation of protein kinase C (PKC), while IP3 releases Ca(2+) from intracellular stores. This is 1-phosphatidylinositol 4,5-bisphosphate phosphodiesterase delta-3-A (plcd3a) from Danio rerio (Zebrafish).